A 184-amino-acid polypeptide reads, in one-letter code: Structural protein V8 (184 aa).

Residues 14-35 form a disordered region; it reads IYNKSNTLTNTPSNPTGNTNTL.

It belongs to the sputnik virus V6 family.

It localises to the virion. This Sputnik virophage protein is Structural protein V8.